The chain runs to 440 residues: C4-dicarboxylate TRAP transporter large permease protein DctM (440 aa).

13 helical membrane-spanning segments follow: residues L4–L24, F54–V74, W89–G109, P112–P132, I148–V168, V181–F201, A230–T250, A255–L275, M291–I311, W318–L338, I349–V369, H370–L390, and V410–I430.

It belongs to the TRAP transporter large permease family. As to quaternary structure, the complex comprises the extracytoplasmic solute receptor protein DctP, and the two transmembrane proteins DctQ and DctM.

The protein resides in the cell inner membrane. In terms of biological role, part of the tripartite ATP-independent periplasmic (TRAP) transport system DctPQM involved in C4-dicarboxylates uptake. This chain is C4-dicarboxylate TRAP transporter large permease protein DctM, found in Rhodobacter capsulatus (Rhodopseudomonas capsulata).